The following is a 407-amino-acid chain: S-adenosylmethionine synthase (407 aa).

His15 is a binding site for ATP. Asp17 is a binding site for Mg(2+). Residue Glu43 coordinates K(+). L-methionine-binding residues include Glu56 and Gln100. The tract at residues 100 to 110 (QSPDIAQGVDE) is flexible loop. ATP is bound by residues 171–173 (DGK), 248–249 (KF), Asp257, 263–264 (RK), Ala280, and Lys284. Asp257 is an L-methionine binding site. An L-methionine-binding site is contributed by Lys288.

It belongs to the AdoMet synthase family. In terms of assembly, homotetramer; dimer of dimers. The cofactor is Mg(2+). It depends on K(+) as a cofactor.

It is found in the cytoplasm. The catalysed reaction is L-methionine + ATP + H2O = S-adenosyl-L-methionine + phosphate + diphosphate. It functions in the pathway amino-acid biosynthesis; S-adenosyl-L-methionine biosynthesis; S-adenosyl-L-methionine from L-methionine: step 1/1. Its function is as follows. Catalyzes the formation of S-adenosylmethionine (AdoMet) from methionine and ATP. The overall synthetic reaction is composed of two sequential steps, AdoMet formation and the subsequent tripolyphosphate hydrolysis which occurs prior to release of AdoMet from the enzyme. The sequence is that of S-adenosylmethionine synthase from Synechococcus sp. (strain RCC307).